Consider the following 130-residue polypeptide: Small ribosomal subunit protein uS9 (130 aa).

The segment at Arg-109–Arg-130 is disordered.

This sequence belongs to the universal ribosomal protein uS9 family.

The polypeptide is Small ribosomal subunit protein uS9 (Malacoplasma penetrans (strain HF-2) (Mycoplasma penetrans)).